Here is an 804-residue protein sequence, read N- to C-terminus: Probable protein phosphatase 2C 18 (804 aa).

Residues 19–39 traverse the membrane as a helical segment; sequence DASGPVLFWCVLIIFAVPDAI. Residues 129–434 form the PPM-type phosphatase domain; that stretch reads KYIVSSMQGL…ENTTVILVQF (306 aa). Residues D165, G166, Q384, and E425 each coordinate Mn(2+). Disordered stretches follow at residues 460 to 509, 564 to 599, 623 to 653, and 675 to 804; these read STSA…GGSA, DEVE…LNAS, PLQG…DDDV, and VDST…EGSP. Residues 468–499 show a composition bias toward low complexity; that stretch reads GSDSDTSATSDEGVDDTATAGTTTTGYEAGSS. Residues 628–637 are compositionally biased toward polar residues; the sequence is DVSSTSTNPN. Positions 638-647 are enriched in low complexity; that stretch reads TATDTGSGSR. The segment covering 713–734 has biased composition (polar residues); that stretch reads LVNNDTTVADNNASGVADSTTV. A compositionally biased stretch (low complexity) spans 776–789; the sequence is DATATATASASAAV. The span at 790–804 shows a compositional bias: acidic residues; that stretch reads ADDEGTAPDDSEGSP.

The protein belongs to the PP2C family. It depends on Mg(2+) as a cofactor. Requires Mn(2+) as cofactor.

It is found in the membrane. The catalysed reaction is O-phospho-L-seryl-[protein] + H2O = L-seryl-[protein] + phosphate. The enzyme catalyses O-phospho-L-threonyl-[protein] + H2O = L-threonyl-[protein] + phosphate. This Oryza sativa subsp. japonica (Rice) protein is Probable protein phosphatase 2C 18.